The sequence spans 462 residues: Kremen protein 2 (462 aa).

Positions 1 to 25 are cleaved as a signal peptide; that stretch reads MGTQALQGFLFLLFLPLLQPRGASA. Topologically, residues 26–364 are extracellular; that stretch reads GSLHSPGLSE…SPRPGAPPAA (339 aa). Residues 35–119 enclose the Kringle domain; that stretch reads ECFQVNGADY…YWRYCDIPSC (85 aa). Intrachain disulfides connect Cys36–Cys119, Cys60–Cys100, and Cys89–Cys114. N-linked (GlcNAc...) asparagine glycosylation is present at Asn49. One can recognise a WSC domain in the interval 121–215; sequence MPGYLGCFVD…DGRLGVYEVS (95 aa). Cys219 and Cys245 form a disulfide bridge. The CUB domain maps to 219–326; it reads CQGNWTAPQG…QGFALTYRGL (108 aa). N-linked (GlcNAc...) asparagine glycans are attached at residues Asn222, Asn244, and Asn351. The interval 328-352 is disordered; the sequence is DAAEDPEAPEGSAQTPAAPLDGANV. Residues 365–387 form a helical membrane-spanning segment; it reads IGARVFSTVTAVSVLLLLLLGLL. The Cytoplasmic portion of the chain corresponds to 388–462; the sequence is RPLRRRSCLL…SSLRSLISAL (75 aa).

As to quaternary structure, interacts with ERLEC1. Forms a ternary complex with DKK1 and LRP6.

Its subcellular location is the membrane. Receptor for Dickkopf proteins. Cooperates with DKK1/2 to inhibit Wnt/beta-catenin signaling by promoting the endocytosis of Wnt receptors LRP5 and LRP6. Plays a role in limb development; attenuates Wnt signaling in the developing limb to allow normal limb patterning and can also negatively regulate bone formation. This Homo sapiens (Human) protein is Kremen protein 2 (KREMEN2).